The primary structure comprises 132 residues: ATP synthase epsilon chain (132 aa).

This sequence belongs to the ATPase epsilon chain family. In terms of assembly, F-type ATPases have 2 components, CF(1) - the catalytic core - and CF(0) - the membrane proton channel. CF(1) has five subunits: alpha(3), beta(3), gamma(1), delta(1), epsilon(1). CF(0) has three main subunits: a, b and c.

It localises to the cell membrane. Its function is as follows. Produces ATP from ADP in the presence of a proton gradient across the membrane. The protein is ATP synthase epsilon chain of Clostridium kluyveri (strain NBRC 12016).